The chain runs to 2169 residues: Voltage-dependent L-type calcium channel subunit alpha-1C (2169 aa).

The Cytoplasmic segment spans residues 1–153 (MVPLVQPTTP…RACISIVEWK (153 aa)). Residues 76-97 (GAALSWQAAIDAGRQAKLMGSA) are calmodulin-binding. The segment covering 98–108 (GNTTISTVSST) has biased composition (polar residues). The disordered stretch occupies residues 98-127 (GNTTISTVSSTQRKRQQYGKPKKQSGTTAT). A compositionally biased stretch (basic residues) spans 109 to 120 (QRKRQQYGKPKK). One copy of the I repeat lies at 140 to 437 (NPIRRACISI…LVLGVLSGEF (298 aa)). Residues 154-172 (PFEIIILLTIFANCVALAI) traverse the membrane as a helical segment. The Extracellular segment spans residues 173 to 187 (YIPFPEDDSNATNSN). Residue Asn182 is glycosylated (N-linked (GlcNAc...) asparagine). A helical transmembrane segment spans residues 188–208 (LERVEYLFLIIFTVEAFLKVI). Residues 209–217 (AYGLLFHPN) lie on the Cytoplasmic side of the membrane. A helical membrane pass occupies residues 218-238 (AYLRNGWNLLDFIIVVVGLFS). Residues 239-261 (AILEQATKADGANALGGKGAGFD) lie on the Extracellular side of the membrane. A helical transmembrane segment spans residues 262–280 (VKALRAFRVLRPLRLVSGV). Over 281 to 297 (PSLQVVLNSIIKAMVPL) the chain is Cytoplasmic. The chain crosses the membrane as a helical span at residues 298–319 (LHTALLVLFVIIIYAIIGLELF). Residues 320-379 (MGKMHKTCYNQEGITDVPAEEDPSPCALESGHGRQCQNGTVCKPGWDGPKHGITNFDNFA) lie on the Extracellular side of the membrane. Cys345 and Cys361 are joined by a disulfide. A glycan (N-linked (GlcNAc...) asparagine) is linked at Asn357. The segment at residues 380–401 (FAMLTVFQCITMEGWTDVLYWM) is an intramembrane region (pore-forming). The Selectivity filter of repeat I motif lies at 390 to 393 (TMEG). Glu392 is a Ca(2+) binding site. The Extracellular portion of the chain corresponds to 402 to 409 (QDAMGYEL). Residues 410–430 (PWVYFVSLVIFGSFFVLNLVL) traverse the membrane as a helical segment. The Cytoplasmic portion of the chain corresponds to 431–553 (GVLSGEFSKE…RKCRAAVKSN (123 aa)). An AID/alpha-interaction domain; mediates interaction with the beta subunit region spans residues 457 to 474 (QQLEEDLKGYLDWITQAE). The tract at residues 478-510 (PENEDEGVDEEKPRNMSMPTSETESVNTENVAG) is disordered. The segment covering 494 to 507 (SMPTSETESVNTEN) has biased composition (polar residues). The residue at position 498 (Ser498) is a Phosphoserine. Thr505 bears the Phosphothreonine mark. One copy of the II repeat lies at 539 to 785 (NRFCRRKCRA…VFLAIAVDNL (247 aa)). Residues 554–572 (VFYWLVIFLVFLNTLTIAS) traverse the membrane as a helical segment. Over 573–583 (EHYNQPHWLTE) the chain is Extracellular. Residues 584-604 (VQDTANKALLALFTAEMLLKM) traverse the membrane as a helical segment. Residues 605-615 (YSLGLQAYFVS) lie on the Cytoplasmic side of the membrane. A helical membrane pass occupies residues 616-635 (LFNRLDCFIVCGGILETILV). The Extracellular segment spans residues 636–644 (ETKIMSPLG). A helical membrane pass occupies residues 645–663 (ISVLRCVRLLRIFKITRYW). At 664 to 682 (NSLSNLVASLLNSVRSIAS) the chain is on the cytoplasmic side. A helical membrane pass occupies residues 683–702 (LLLLLFLFIIIFSLLGMQLF). The Extracellular segment spans residues 703–722 (GGKFNFDEMRTRRSTFDNFP). The segment at residues 723–744 (QSLLTVFQILTGEDWNSVMYDG) is an intramembrane region (pore-forming). The Selectivity filter of repeat II motif lies at 733–736 (TGED). Glu735 contributes to the Ca(2+) binding site. Residues 745–754 (IMAYGGPSFP) lie on the Extracellular side of the membrane. The chain crosses the membrane as a helical span at residues 755–774 (GMLVCIYFIILFICGNYILL). The Cytoplasmic portion of the chain corresponds to 775–929 (NVFLAIAVDN…LQCHRIVNDT (155 aa)). The tract at residues 793–890 (SAQKEEEEEK…EMPVGPRPRP (98 aa)) is disordered. Residues 812–835 (SPEKKQEVVEKPAVEETKEEKIEL) show a composition bias toward basic and acidic residues. Phosphoserine occurs at positions 837 and 844. An interaction with STAC2 region spans residues 858–905 (NENEDKSPYPNPDAAGEEDEEEPEMPVGPRPRPLSELHLKEKAVPMPE). The segment covering 872 to 881 (AGEEDEEEPE) has biased composition (acidic residues). The stretch at 916-1198 (NRFRLQCHRI…IFVGFVIVTF (283 aa)) is one III repeat. A helical membrane pass occupies residues 930–948 (IFTNLILFFILLSSISLAA). At 949-960 (EDPVQHTSFRNH) the chain is on the extracellular side. A helical transmembrane segment spans residues 961 to 980 (ILFYFDIVFTTIFTIEIALK). The Cytoplasmic segment spans residues 981–996 (MTAYGAFLHKGSFCRN). A helical membrane pass occupies residues 997 to 1015 (YFNILDLLVVSVSLISFGI). Residues 1016 to 1022 (QSSAINV) are Extracellular-facing. The chain crosses the membrane as a helical span at residues 1023–1041 (VKILRVLRVLRPLRAINRA). At 1042 to 1060 (KGLKHVVQCVFVAIRTIGN) the chain is on the cytoplasmic side. Residues 1061–1080 (IVIVTTLLQFMFACIGVQLF) form a helical membrane-spanning segment. At 1081-1130 (KGKLYTCSDSSKQTEAECKGNYITYKDGEVDQPIIQPRSWENSKFDFDNV) the chain is on the extracellular side. Residues Cys1087 and Cys1098 are joined by a disulfide bond. Positions 1118 to 1207 (RSWENSKFDF…FQEQGEQEYK (90 aa)) are dihydropyridine binding. Positions 1131-1151 (LAAMMALFTVSTFEGWPELLY) form an intramembrane region, pore-forming. The Selectivity filter of repeat III signature appears at 1142–1145 (TFEG). Glu1144 serves as a coordination point for Ca(2+). Topologically, residues 1152 to 1168 (RSIDSHTEDKGPIYNYR) are extracellular. A helical transmembrane segment spans residues 1169 to 1190 (VEISIFFIIYIIIIAFFMMNIF). The Cytoplasmic portion of the chain corresponds to 1191–1248 (VGFVIVTFQEQGEQEYKNCELDKNQRQCVEYALKARPLRRYIPKNQHQYKVWYVVNST). Residues 1235-1508 (NQHQYKVWYV…LFVAVVMDNF (274 aa)) form an IV repeat. The helical transmembrane segment at 1249 to 1270 (YFEYLMFVLILLNTICLAMQHY) threads the bilayer. At 1271–1278 (GQSCLFKI) the chain is on the extracellular side. Residues 1279–1300 (AMNILNMLFTGLFTVEMILKLI) form a helical membrane-spanning segment. Topologically, residues 1301–1310 (AFKPKHYFCD) are cytoplasmic. Residues 1311 to 1330 (AWNTFDALIVVGSIVDIAIT) traverse the membrane as a helical segment. The Extracellular portion of the chain corresponds to 1331–1353 (EVNPAEHTQCSPSMNAEENSRIS). A helical transmembrane segment spans residues 1354-1372 (ITFFRLFRVMRLVKLLSRG). Residues 1373–1390 (EGIRTLLWTFIKSFQALP) are Cytoplasmic-facing. The chain crosses the membrane as a helical span at residues 1391-1411 (YVALLIVMLFFIYAVIGMQVF). The Extracellular segment spans residues 1412–1433 (GKIALNDTTEINRNNNFQTFPQ). N-linked (GlcNAc...) asparagine glycosylation occurs at Asn1417. Positions 1434–1452 (AVLLLFRCATGEAWQDIML) form an intramembrane region, pore-forming. Residues 1443–1446 (TGEA) carry the Selectivity filter of repeat IV motif. Over 1453–1480 (ACMPGKKCAPESDPSNSTEGETPCGSSF) the chain is Extracellular. A dihydropyridine binding region spans residues 1459 to 1527 (KCAPESDPSN…LGPHHLDEFK (69 aa)). Residues Cys1460 and Cys1476 are joined by a disulfide bond. The N-linked (GlcNAc...) asparagine glycan is linked to Asn1468. The tract at residues 1473–1515 (ETPCGSSFAVFYFISFYMLCAFLIINLFVAVVMDNFDYLTRDW) is phenylalkylamine binding. The chain crosses the membrane as a helical span at residues 1481 to 1505 (AVFYFISFYMLCAFLIINLFVAVVM). The Cytoplasmic portion of the chain corresponds to 1506 to 2169 (DNFDYLTRDW…ADSRVHVRSL (664 aa)). The tract at residues 1640-1667 (DEVTVGKFYATFLIQEYFRKFKKRKEQG) is important for interaction with STAC1, STAC2 and STAC3. The tract at residues 1646–1666 (KFYATFLIQEYFRKFKKRKEQ) is calmodulin-binding IQ region. Residues 1680–1699 (LQAGLRTLHDIGPEIRRAIS) are important for localization in at the junctional membrane. 2 positions are modified to phosphoserine: Ser1699 and Ser1720. 2 disordered regions span residues 1761–1793 (KAGNNQGDTESPSHEKLVDSTFTPSSYSSTGSN) and 1894–1920 (ENRQLTPPEEDKGDTRPSPKKGFLRSA). Residues 1780 to 1792 (STFTPSSYSSTGS) are compositionally biased toward polar residues. The span at 1894 to 1910 (ENRQLTPPEEDKGDTRP) shows a compositional bias: basic and acidic residues. The residue at position 1927 (Ser1927) is a Phosphoserine.

It belongs to the calcium channel alpha-1 subunit (TC 1.A.1.11) family. CACNA1C subfamily. As to quaternary structure, component of a calcium channel complex consisting of a pore-forming alpha subunit (CACNA1C) and ancillary beta, gamma and delta subunits. The channel complex contains alpha, beta, gamma and delta subunits in a 1:1:1:1 ratio, i.e. it contains only one of each type of subunit. CACNA1C channel activity is modulated by ancillary subunits, such as CACNB1, CACNB2, CACNB3, CACNA2D1 and CACNA2D4. Interacts with CACNB1. Interacts with CACNB2. Identified in a complex with CACNA2D4 and CACNB3. Interacts with CACNB3. Interacts with CACNA2D1. Interacts with CACNA2D4. Interacts with the gamma subunits CACNG4, CACNG6, CACNG7 and CACNG8. Interacts with CALM1. Interacts (via the N-terminus and the C-terminal C and IQ motifs) with CABP1; this inhibits Ca(2+)-dependent channel inactivation. The binding via the C motif is calcium independent whereas the binding via IQ requires the presence of calcium and is mutually exclusive with calmodulin binding. The binding to the cytoplasmic N-terminal domain is calcium independent but is essential for the channel modulation. Interacts (via C-terminal CDB motif) with CABP5; in a calcium-dependent manner. Interacts with CIB1; the interaction increases upon cardiomyocytes hypertrophy. Interacts with STAC2 and STAC3; this inhibits channel inactivation. Post-translationally, phosphorylation by PKA at Ser-1927 activates the channel. Elevated levels of blood glucose lead to increased phosphorylation by PKA. As to expression, expressed in heart. Expressed in uterus.

It is found in the cell membrane. The protein resides in the sarcolemma. It localises to the perikaryon. The protein localises to the postsynaptic density membrane. Its subcellular location is the cell projection. It is found in the dendrite. The protein resides in the T-tubule. The enzyme catalyses Ca(2+)(in) = Ca(2+)(out). With respect to regulation, inhibited by dihydropyridines (DHP), such as isradipine. Inhibited by nifedipine. Channel activity is regulated by Ca(2+) and calmodulin. Binding of STAC1, STAC2 or STAC3 to a region that overlaps with the calmodulin binding site inhibits channel inactivation by Ca(2+) and calmodulin. Binding of calmodulin or CABP1 at the same regulatory sites results in opposite effects on the channel function. Shear stress and pressure increases calcium channel activity. Functionally, pore-forming, alpha-1C subunit of the voltage-gated calcium channel that gives rise to L-type calcium currents. Mediates influx of calcium ions into the cytoplasm, and thereby triggers calcium release from the sarcoplasm. Plays an important role in excitation-contraction coupling in the heart. Required for normal heart development and normal regulation of heart rhythm. Required for normal contraction of smooth muscle cells in blood vessels and in the intestine. Essential for normal blood pressure regulation via its role in the contraction of arterial smooth muscle cells. Long-lasting (L-type) calcium channels belong to the 'high-voltage activated' (HVA) group. This Cavia porcellus (Guinea pig) protein is Voltage-dependent L-type calcium channel subunit alpha-1C (CACNA1C).